We begin with the raw amino-acid sequence, 739 residues long: Phosphoribosylformylglycinamidine synthase subunit PurL (739 aa).

Residue histidine 49 is part of the active site. 2 residues coordinate ATP: tyrosine 52 and lysine 91. Glutamate 93 lines the Mg(2+) pocket. Residues 94–97 and arginine 116 contribute to the substrate site; that span reads SHNH. Catalysis depends on histidine 95, which acts as the Proton acceptor. Aspartate 117 contributes to the Mg(2+) binding site. Glutamine 240 contacts substrate. Mg(2+) is bound at residue aspartate 268. 312-314 serves as a coordination point for substrate; it reads ESQ. Aspartate 493 and glycine 530 together coordinate ATP. Residue asparagine 531 participates in Mg(2+) binding. Substrate is bound at residue serine 533.

The protein belongs to the FGAMS family. Monomer. Part of the FGAM synthase complex composed of 1 PurL, 1 PurQ and 2 PurS subunits.

The protein localises to the cytoplasm. It catalyses the reaction N(2)-formyl-N(1)-(5-phospho-beta-D-ribosyl)glycinamide + L-glutamine + ATP + H2O = 2-formamido-N(1)-(5-O-phospho-beta-D-ribosyl)acetamidine + L-glutamate + ADP + phosphate + H(+). The protein operates within purine metabolism; IMP biosynthesis via de novo pathway; 5-amino-1-(5-phospho-D-ribosyl)imidazole from N(2)-formyl-N(1)-(5-phospho-D-ribosyl)glycinamide: step 1/2. Part of the phosphoribosylformylglycinamidine synthase complex involved in the purines biosynthetic pathway. Catalyzes the ATP-dependent conversion of formylglycinamide ribonucleotide (FGAR) and glutamine to yield formylglycinamidine ribonucleotide (FGAM) and glutamate. The FGAM synthase complex is composed of three subunits. PurQ produces an ammonia molecule by converting glutamine to glutamate. PurL transfers the ammonia molecule to FGAR to form FGAM in an ATP-dependent manner. PurS interacts with PurQ and PurL and is thought to assist in the transfer of the ammonia molecule from PurQ to PurL. This is Phosphoribosylformylglycinamidine synthase subunit PurL from Parvibaculum lavamentivorans (strain DS-1 / DSM 13023 / NCIMB 13966).